The chain runs to 443 residues: Threonine/serine transporter TdcC (443 aa).

The next 11 membrane-spanning stretches (helical) occupy residues 22–42 (TTWTLGLFGTAIGAGVLFFPI), 44–64 (AGFGGLIPILLMLVLAYPIAF), 97–117 (GVVITFLYFFAICPLLWIYGV), 140–160 (VVALFLLLLMAFVIWFGKDLM), 163–183 (VMSYLVWPFIASLVLISLSLI), 207–227 (ILVTVWLGISIMVFSFNFSPI), 259–279 (ASMLMVAVVMFFAFSCLFTLS), 319–339 (ASIIALVAIFKSFFGHYLGTL), 366–386 (ISMIFIMGSTWIVAYANPNIL), 389–409 (IEAMGAPIIASLLCLLPMYAI), and 423–443 (DNVFVTLIGLLTILNIVYKLF).

This sequence belongs to the amino acid/polyamine transporter 2 family. SdaC/TdcC subfamily.

Its subcellular location is the cell inner membrane. It catalyses the reaction L-threonine(in) + H(+)(in) = L-threonine(out) + H(+)(out). It carries out the reaction L-serine(in) + H(+)(in) = L-serine(out) + H(+)(out). Functionally, involved in the import of threonine and serine into the cell, with the concomitant import of a proton (symport system). The polypeptide is Threonine/serine transporter TdcC (Salmonella arizonae (strain ATCC BAA-731 / CDC346-86 / RSK2980)).